The chain runs to 633 residues: Extracellular metalloproteinase 3 (633 aa).

The first 18 residues, 1 to 18 (MHGLLLAGLLALPMNVLA), serve as a signal peptide directing secretion. The propeptide occupies 19-246 (HPAEHHASNV…VHNVVDYVAS (228 aa)). N-linked (GlcNAc...) asparagine glycosylation is found at N232 and N410. H429 is a binding site for Zn(2+). E430 is a catalytic residue. H433 is a binding site for Zn(2+). N480 and N622 each carry an N-linked (GlcNAc...) asparagine glycan.

Belongs to the peptidase M36 family. Zn(2+) serves as cofactor.

It is found in the secreted. Its function is as follows. Secreted metalloproteinase that allows assimilation of proteinaceous substrates and probably acts as a virulence factor. The sequence is that of Extracellular metalloproteinase 3 (MEP3) from Arthroderma gypseum (strain ATCC MYA-4604 / CBS 118893) (Microsporum gypseum).